The following is a 296-amino-acid chain: Splicing factor U2af small subunit A (296 aa).

The C3H1-type 1 zinc finger occupies 12–40 (EKDRVNCPFYFKIGACRHGDRCSRLHNRP). Positions 44 to 146 (PTLLLSNMYQ…RPIIADFSPV (103 aa)) constitute an RRM domain. The C3H1-type 2 zinc finger occupies 148 to 175 (DFREATCRQYEENNCNRGGYCNFMHVKL). The span at 191–202 (SYRRGSRSRSRS) shows a compositional bias: basic residues. The disordered stretch occupies residues 191–296 (SYRRGSRSRS…EREEKEEGGA (106 aa)). 2 stretches are compositionally biased toward basic and acidic residues: residues 209–254 (NKRD…DGSR) and 272–296 (EGSEERRARIEQWNREREEKEEGGA).

It belongs to the splicing factor SR family. In terms of assembly, component of the spliceosome. Homo- and heterodimer. Interacts with U2AF35B, RNU1 and SR45.

Its subcellular location is the nucleus speckle. Functionally, necessary for the splicing of pre-mRNA. Probably active at the 3' splice sites. This chain is Splicing factor U2af small subunit A, found in Arabidopsis thaliana (Mouse-ear cress).